We begin with the raw amino-acid sequence, 261 residues long: MPSDPGPEAGSGWPGLLMSCLKGPHVILKMEAMKIVHPEKFPELPAAPCFPPAPRPTPTLAPKRAWPSDTEIIVNQACGGDMPALEGAPHTPPLPRRPRKGSSELGFPRVAPEDEVIVNQYVIRPGPSASAASSAAAGEPLECPTCGHSYNVTQRRPRVLSCLHSVCEQCLQILYESCPKYKFISCPTCRRETVLFTDYGLAALAVNTSILSRLPPEALTAPSGGQWGAEPEGSCYQTFRQYCGAACTCHVRNPLSACSIM.

The tract at residues 83–106 is disordered; that stretch reads PALEGAPHTPPLPRRPRKGSSELG. Phosphoserine is present on Ser-102. An RING-type zinc finger spans residues 143-190; it reads CPTCGHSYNVTQRRPRVLSCLHSVCEQCLQILYESCPKYKFISCPTCR.

The polypeptide is RING finger protein 208 (RNF208) (Homo sapiens (Human)).